The chain runs to 157 residues: 1,4-dihydroxy-2-naphthoyl-CoA thioesterase 2 (157 aa).

Glu56 is an active-site residue. The Microbody targeting signal motif lies at 154–156; sequence ISK.

Belongs to the 4-hydroxybenzoyl-CoA thioesterase family. DHNA-CoA hydrolase subfamily. As to quaternary structure, homotetramers.

It is found in the peroxisome. It participates in cofactor biosynthesis; phylloquinone biosynthesis. It functions in the pathway quinol/quinone metabolism; 1,4-dihydroxy-2-naphthoate biosynthesis; 1,4-dihydroxy-2-naphthoate from chorismate: step 7/7. Functionally, catalyzes the hydrolysis of the thioester bond of 1,4-dihydroxy-2-naphthoyl-CoA (DHNA-CoA) in peroxisomes, a necessary step to form the naphthoquinone ring of phylloquinone (vitamin K(1)). Displayed also slight thioesterase activity towards benzoyl-CoA. Is not active on phenylacetyl-CoA, succinyl-CoA and palmitoyl-CoA thioesters. In Arabidopsis thaliana (Mouse-ear cress), this protein is 1,4-dihydroxy-2-naphthoyl-CoA thioesterase 2.